The chain runs to 182 residues: 3-hydroxyanthranilate 3,4-dioxygenase (182 aa).

R46 is a binding site for O2. Fe cation contacts are provided by H50, E56, and H96. Residue E56 participates in substrate binding. Residues R100 and E111 each coordinate substrate. C126, C129, C163, and C166 together coordinate Fe cation.

Belongs to the 3-HAO family. Homodimer. Fe(2+) is required as a cofactor.

The enzyme catalyses 3-hydroxyanthranilate + O2 = (2Z,4Z)-2-amino-3-carboxymuconate 6-semialdehyde. The protein operates within cofactor biosynthesis; NAD(+) biosynthesis; quinolinate from L-kynurenine: step 3/3. Catalyzes the oxidative ring opening of 3-hydroxyanthranilate to 2-amino-3-carboxymuconate semialdehyde, which spontaneously cyclizes to quinolinate. The polypeptide is 3-hydroxyanthranilate 3,4-dioxygenase (Brucella anthropi (strain ATCC 49188 / DSM 6882 / CCUG 24695 / JCM 21032 / LMG 3331 / NBRC 15819 / NCTC 12168 / Alc 37) (Ochrobactrum anthropi)).